The sequence spans 145 residues: Synaptojanin-2-binding protein (145 aa).

Residues 1–117 (MNGRVDYLVT…GPQGEGEPSG (117 aa)) are Cytoplasmic-facing. The PDZ domain maps to 13–100 (EINLTRGPSG…AVSLRVQHRL (88 aa)). Residues 118–138 (IPIAMVLVPVFALTMVAAWAF) traverse the membrane as a helical; Anchor for type IV membrane protein segment. The Mitochondrial intermembrane portion of the chain corresponds to 139–145 (MRYRQRL).

As to quaternary structure, binds (via the PDZ domain) to isoform 2A of SYNJ2 (via the unique motif in the C-terminus). Interacts (via C-terminus) with RALBP1. Interacts (via PDZ domain) with ACVR2A (via C-terminus) and ACVR2B (via C-terminus). Forms a ternary complex with ACVR2A and RALBP1. Interacts with MAPK12. Interacts with DLL1; enhances DLL1 protein stability, and promotes notch signaling in endothelial cells.

It localises to the mitochondrion outer membrane. The protein localises to the cytoplasm. The protein resides in the perinuclear region. Regulates endocytosis of activin type 2 receptor kinases through the Ral/RALBP1-dependent pathway and may be involved in suppression of activin-induced signal transduction. This Bos taurus (Bovine) protein is Synaptojanin-2-binding protein.